The sequence spans 199 residues: Transcription factor 15 (199 aa).

The segment at 25 to 67 (EENRSESDASDQSFGCCEGPEAARRGPGPGGGRRAGGGGGAGP) is disordered. Gly residues predominate over residues 51 to 66 (PGPGGGRRAGGGGGAG). The bHLH domain occupies 72 to 124 (RQRQAANARERDRTQSVNTAFTALRTLIPTEPVDRKLSKIETVRLASSYIAHL).

Heterodimer; efficient DNA binding requires dimerization with another bHLH protein, such as TCF3/E12. Interacts with MEOX2.

It localises to the nucleus. Early transcription factor that plays a key role in somitogenesis, paraxial mesoderm development and regulation of stem cell pluripotency. Essential for the mesenchymal to epithelial transition associated with somite formation. Required for somite morphogenesis, thereby regulating patterning of the axial skeleton and skeletal muscles. Required for proper localization of somite epithelium markers during the mesenchymal to epithelial transition. Also plays a key role in regulation of stem cell pluripotency. Promotes pluripotency exit of embryonic stem cells (ESCs) by priming ESCs for differentiation. Acts as a key regulator of self-renewal of hematopoietic stem cells (HSCs) by mediating HSCs quiescence and long-term self-renewal. Together with MEOX2, regulates transcription in heart endothelial cells to regulate fatty acid transport across heart endothelial cells. Acts by forming a heterodimer with another helix-loop-helix (bHLH) protein, such as TCF3/E12, that binds DNA on E-box motifs (5'-CANNTG-3') and activates transcription of target genes. The protein is Transcription factor 15 of Homo sapiens (Human).